Reading from the N-terminus, the 233-residue chain is Gamma-interferon-responsive lysosomal thiol protein (233 aa).

An N-terminal signal peptide occupies residues 1–26 (MVSSSLTKLVFFGCLLLLTFTDNLVA). A disulfide bridge connects residues Cys42 and Cys45. Residues Asn80 and Asn207 are each glycosylated (N-linked (GlcNAc...) asparagine). A propeptide spans 200–233 (TTLPKVCNSSASMSKSPERKWKLQVSYANKATNY) (removed in mature form).

This sequence belongs to the GILT family. In terms of assembly, dimer; disulfide-linked. Expressed in the outer integument of seed coat.

It is found in the secreted. The protein localises to the lysosome. In terms of biological role, lysosomal thiol reductase that can reduce protein disulfide bonds. May facilitate the complete unfolding of proteins destined for lysosomal degradation. The polypeptide is Gamma-interferon-responsive lysosomal thiol protein (Arabidopsis thaliana (Mouse-ear cress)).